Here is a 143-residue protein sequence, read N- to C-terminus: Small ribosomal subunit protein bS6 (143 aa).

Residues 96–143 are disordered; it reads VTEASPMAAAKEERRDDRREVKKDVAAAPVEAKEDSVEEKSEEAASEE. Basic and acidic residues predominate over residues 105 to 143; sequence AKEERRDDRREVKKDVAAAPVEAKEDSVEEKSEEAASEE.

This sequence belongs to the bacterial ribosomal protein bS6 family.

Functionally, binds together with bS18 to 16S ribosomal RNA. In Colwellia psychrerythraea (strain 34H / ATCC BAA-681) (Vibrio psychroerythus), this protein is Small ribosomal subunit protein bS6.